The chain runs to 223 residues: Imidazoleglycerol-phosphate dehydratase (223 aa).

The protein belongs to the imidazoleglycerol-phosphate dehydratase family.

It catalyses the reaction D-erythro-1-(imidazol-4-yl)glycerol 3-phosphate = 3-(imidazol-4-yl)-2-oxopropyl phosphate + H2O. Its pathway is amino-acid biosynthesis; L-histidine biosynthesis; L-histidine from 5-phospho-alpha-D-ribose 1-diphosphate: step 6/9. The protein is Imidazoleglycerol-phosphate dehydratase (HIS3) of Zygosaccharomyces bailii.